A 700-amino-acid polypeptide reads, in one-letter code: Elongation factor G (700 aa).

Positions 10 to 286 (NKVRNIGIMA…AVIDYLPNPL (277 aa)) constitute a tr-type G domain. Residues 19-26 (AHIDAGKT), 83-87 (DTPGH), and 137-140 (NKMD) contribute to the GTP site.

The protein belongs to the TRAFAC class translation factor GTPase superfamily. Classic translation factor GTPase family. EF-G/EF-2 subfamily.

The protein resides in the cytoplasm. Catalyzes the GTP-dependent ribosomal translocation step during translation elongation. During this step, the ribosome changes from the pre-translocational (PRE) to the post-translocational (POST) state as the newly formed A-site-bound peptidyl-tRNA and P-site-bound deacylated tRNA move to the P and E sites, respectively. Catalyzes the coordinated movement of the two tRNA molecules, the mRNA and conformational changes in the ribosome. This chain is Elongation factor G, found in Rhodococcus opacus (strain B4).